We begin with the raw amino-acid sequence, 415 residues long: Squalene synthase clz20 (415 aa).

An N-linked (GlcNAc...) asparagine glycan is attached at Asn114. The chain crosses the membrane as a helical span at residues 395–415; the sequence is ADTMYLAVLVLGVFGVVAAIL.

Belongs to the phytoene/squalene synthase family. Mg(2+) serves as cofactor.

It localises to the membrane. It carries out the reaction 2 (2E,6E)-farnesyl diphosphate + NADH + H(+) = squalene + 2 diphosphate + NAD(+). It catalyses the reaction 2 (2E,6E)-farnesyl diphosphate + NADPH + H(+) = squalene + 2 diphosphate + NADP(+). The protein operates within terpene metabolism; lanosterol biosynthesis; lanosterol from farnesyl diphosphate: step 1/3. Functionally, squalene synthase; part of the gene cluster that mediates the biosynthesis of squalestatin S1 (SQS1, also known as zaragozic acid A), a heavily oxidized fungal polyketide that offers potent cholesterol lowering activity by targeting squalene synthase (SS). Catalyzes the condensation of 2 two farnesyl pyrophosphate moieties to form squalene. The presence of a gene encoding a squalene synthase supports the identification of the cluster as being responsible for SQS1 production and suggests a likely mechanism for self-resistance. The protein is Squalene synthase clz20 of Cochliobolus lunatus (Filamentous fungus).